A 217-amino-acid polypeptide reads, in one-letter code: Large ribosomal subunit protein uL3 (217 aa).

Positions 134–146 (GRATHGNSRSHNV) are enriched in polar residues. Residues 134 to 154 (GRATHGNSRSHNVPGSIGMAQ) are disordered. The residue at position 154 (Gln154) is an N5-methylglutamine.

This sequence belongs to the universal ribosomal protein uL3 family. In terms of assembly, part of the 50S ribosomal subunit. Forms a cluster with proteins L14 and L19. Methylated by PrmB.

Its function is as follows. One of the primary rRNA binding proteins, it binds directly near the 3'-end of the 23S rRNA, where it nucleates assembly of the 50S subunit. In Burkholderia cenocepacia (strain HI2424), this protein is Large ribosomal subunit protein uL3.